Here is a 441-residue protein sequence, read N- to C-terminus: uncharacterized protein (441 aa).

The protein belongs to the outer membrane factor (OMF) (TC 1.B.17) family.

This is an uncharacterized protein from Haemophilus influenzae (strain ATCC 51907 / DSM 11121 / KW20 / Rd).